Consider the following 314-residue polypeptide: DNA-directed RNA polymerase subunit alpha (314 aa).

Positions 1–228 (MIEIEKPKIE…EHLNIFVGLT (228 aa)) are alpha N-terminal domain (alpha-NTD). The tract at residues 245 to 314 (KEKVMEMTIE…DLGLGLRDDD (70 aa)) is alpha C-terminal domain (alpha-CTD).

It belongs to the RNA polymerase alpha chain family. Homodimer. The RNAP catalytic core consists of 2 alpha, 1 beta, 1 beta' and 1 omega subunit. When a sigma factor is associated with the core the holoenzyme is formed, which can initiate transcription.

It catalyses the reaction RNA(n) + a ribonucleoside 5'-triphosphate = RNA(n+1) + diphosphate. DNA-dependent RNA polymerase catalyzes the transcription of DNA into RNA using the four ribonucleoside triphosphates as substrates. The chain is DNA-directed RNA polymerase subunit alpha from Oceanobacillus iheyensis (strain DSM 14371 / CIP 107618 / JCM 11309 / KCTC 3954 / HTE831).